A 236-amino-acid chain; its full sequence is Ribosome assembly factor mrt4 (236 aa).

It belongs to the universal ribosomal protein uL10 family. In terms of assembly, associates with the pre-60S ribosomal particle.

The protein localises to the nucleus. It localises to the nucleolus. The protein resides in the cytoplasm. In terms of biological role, component of the ribosome assembly machinery. Nuclear paralog of the ribosomal protein P0, it binds pre-60S subunits at an early stage of assembly in the nucleolus, and is replaced by P0 in cytoplasmic pre-60S subunits and mature 80S ribosomes. In Eremothecium gossypii (strain ATCC 10895 / CBS 109.51 / FGSC 9923 / NRRL Y-1056) (Yeast), this protein is Ribosome assembly factor mrt4.